A 283-amino-acid polypeptide reads, in one-letter code: Thymidylate synthase (283 aa).

Arg-21 provides a ligand contact to dUMP. His-51 provides a ligand contact to (6R)-5,10-methylene-5,6,7,8-tetrahydrofolate. Position 123 to 124 (123 to 124) interacts with dUMP; it reads RR. Residue Cys-156 is the Nucleophile of the active site. DUMP contacts are provided by residues 185 to 188, Asn-196, and 226 to 228; these read RSAD and HIY. Residue Asp-188 participates in (6R)-5,10-methylene-5,6,7,8-tetrahydrofolate binding. Ala-282 serves as a coordination point for (6R)-5,10-methylene-5,6,7,8-tetrahydrofolate.

It belongs to the thymidylate synthase family. Bacterial-type ThyA subfamily. Homodimer.

Its subcellular location is the cytoplasm. The enzyme catalyses dUMP + (6R)-5,10-methylene-5,6,7,8-tetrahydrofolate = 7,8-dihydrofolate + dTMP. It participates in pyrimidine metabolism; dTTP biosynthesis. Catalyzes the reductive methylation of 2'-deoxyuridine-5'-monophosphate (dUMP) to 2'-deoxythymidine-5'-monophosphate (dTMP) while utilizing 5,10-methylenetetrahydrofolate (mTHF) as the methyl donor and reductant in the reaction, yielding dihydrofolate (DHF) as a by-product. This enzymatic reaction provides an intracellular de novo source of dTMP, an essential precursor for DNA biosynthesis. This Flavobacterium johnsoniae (strain ATCC 17061 / DSM 2064 / JCM 8514 / BCRC 14874 / CCUG 350202 / NBRC 14942 / NCIMB 11054 / UW101) (Cytophaga johnsonae) protein is Thymidylate synthase.